Reading from the N-terminus, the 71-residue chain is Defensin-like protein 292 (71 aa).

Disulfide bonds link Cys-44/Cys-64, Cys-50/Cys-69, and Cys-56/Cys-71.

Belongs to the DEFL family.

This chain is Defensin-like protein 292, found in Arabidopsis thaliana (Mouse-ear cress).